The following is a 101-amino-acid chain: Small ribosomal subunit protein uS14 (101 aa).

It belongs to the universal ribosomal protein uS14 family. Part of the 30S ribosomal subunit. Contacts proteins S3 and S10.

Functionally, binds 16S rRNA, required for the assembly of 30S particles and may also be responsible for determining the conformation of the 16S rRNA at the A site. This chain is Small ribosomal subunit protein uS14, found in Shewanella putrefaciens (strain CN-32 / ATCC BAA-453).